Here is a 459-residue protein sequence, read N- to C-terminus: Asperlicin C monooxygenase (459 aa).

3 residues coordinate FAD: Asp49, Ala62, and Arg121. Residue Arg199 is part of the active site. 2 residues coordinate FAD: Asp323 and Ala336.

It belongs to the paxM FAD-dependent monooxygenase family. FAD serves as cofactor.

The catalysed reaction is asperlicin C + NADPH + O2 + H(+) = asperlicin E + NADP(+) + H2O. It carries out the reaction asperlicin C + NADH + O2 + H(+) = asperlicin E + NAD(+) + H2O. In terms of biological role, catalyzes the conversion of asperlicin A to form asperlicin E, a potent cholecystokinin receptor CCK(A) antagonist. This is Asperlicin C monooxygenase from Petromyces alliaceus (Aspergillus alliaceus).